The primary structure comprises 153 residues: Xanthine-guanine phosphoribosyltransferase (153 aa).

5-phospho-alpha-D-ribose 1-diphosphate-binding positions include 37 to 38, arginine 69, and 88 to 96; these read RG and DDLVDTGGT. Arginine 69 contacts GMP. A Mg(2+)-binding site is contributed by aspartate 89. Residues aspartate 92 and isoleucine 135 each coordinate guanine. Xanthine-binding residues include aspartate 92 and isoleucine 135. Residues 92–96 and 134–135 contribute to the GMP site; these read DTGGT and WI.

Belongs to the purine/pyrimidine phosphoribosyltransferase family. XGPT subfamily. Homotetramer. Mg(2+) is required as a cofactor.

It is found in the cell inner membrane. It catalyses the reaction GMP + diphosphate = guanine + 5-phospho-alpha-D-ribose 1-diphosphate. The catalysed reaction is XMP + diphosphate = xanthine + 5-phospho-alpha-D-ribose 1-diphosphate. It carries out the reaction IMP + diphosphate = hypoxanthine + 5-phospho-alpha-D-ribose 1-diphosphate. The protein operates within purine metabolism; GMP biosynthesis via salvage pathway; GMP from guanine: step 1/1. It functions in the pathway purine metabolism; XMP biosynthesis via salvage pathway; XMP from xanthine: step 1/1. Purine salvage pathway enzyme that catalyzes the transfer of the ribosyl-5-phosphate group from 5-phospho-alpha-D-ribose 1-diphosphate (PRPP) to the N9 position of the 6-oxopurines guanine and xanthine to form the corresponding ribonucleotides GMP (guanosine 5'-monophosphate) and XMP (xanthosine 5'-monophosphate), with the release of PPi. To a lesser extent, also acts on hypoxanthine. The protein is Xanthine-guanine phosphoribosyltransferase of Photorhabdus laumondii subsp. laumondii (strain DSM 15139 / CIP 105565 / TT01) (Photorhabdus luminescens subsp. laumondii).